The primary structure comprises 300 residues: Dihydroorotate dehydrogenase B (NAD(+)), catalytic subunit (300 aa).

Residues Ser20 and 44–45 contribute to the FMN site; that span reads KG. Substrate contacts are provided by residues Lys44 and 68-72; that span reads NAIGL. Residues Asn98 and Asn125 each contribute to the FMN site. Asn125 is a substrate binding site. Cys128 functions as the Nucleophile in the catalytic mechanism. Residues Lys163 and Ile189 each contribute to the FMN site. A substrate-binding site is contributed by 190–191; that stretch reads NT. Residues Gly215, 241–242, and 263–264 each bind FMN; these read GG and GT.

The protein belongs to the dihydroorotate dehydrogenase family. Type 1 subfamily. As to quaternary structure, heterotetramer of 2 PyrK and 2 PyrD type B subunits. It depends on FMN as a cofactor.

The protein resides in the cytoplasm. It carries out the reaction (S)-dihydroorotate + NAD(+) = orotate + NADH + H(+). Its pathway is pyrimidine metabolism; UMP biosynthesis via de novo pathway; orotate from (S)-dihydroorotate (NAD(+) route): step 1/1. Functionally, catalyzes the conversion of dihydroorotate to orotate with NAD(+) as electron acceptor. The polypeptide is Dihydroorotate dehydrogenase B (NAD(+)), catalytic subunit (pyrD) (Lachnoclostridium phytofermentans (strain ATCC 700394 / DSM 18823 / ISDg) (Clostridium phytofermentans)).